The sequence spans 195 residues: MAKPVRAIVGLGNPGPDYAQTRHNAGALWLEHLARKKGQFLRPDKKLHGDYCKISIAGEDIHLLFPSTFMNRSGQSVLSLSQFYKIELENILVAHDELDIDAGTLRLKFGGGHGGHNGLRDIIRCFGGNKDFPRMRLGIGHPGDKSKVTSHVLGRISKEDMDKLESAFYQLDTHLEAIISGQWDTAMNRLHSFRA.

A tRNA-binding site is contributed by Tyr-18. The Proton acceptor role is filled by His-23. Residues Phe-69, Asn-71, and Asn-117 each contribute to the tRNA site.

The protein belongs to the PTH family. Monomer.

It is found in the cytoplasm. It catalyses the reaction an N-acyl-L-alpha-aminoacyl-tRNA + H2O = an N-acyl-L-amino acid + a tRNA + H(+). Its function is as follows. Hydrolyzes ribosome-free peptidyl-tRNAs (with 1 or more amino acids incorporated), which drop off the ribosome during protein synthesis, or as a result of ribosome stalling. Catalyzes the release of premature peptidyl moieties from peptidyl-tRNA molecules trapped in stalled 50S ribosomal subunits, and thus maintains levels of free tRNAs and 50S ribosomes. In Hahella chejuensis (strain KCTC 2396), this protein is Peptidyl-tRNA hydrolase.